The primary structure comprises 443 residues: Thymidine phosphorylase (443 aa).

Belongs to the thymidine/pyrimidine-nucleoside phosphorylase family. As to quaternary structure, homodimer.

The catalysed reaction is thymidine + phosphate = 2-deoxy-alpha-D-ribose 1-phosphate + thymine. The protein operates within pyrimidine metabolism; dTMP biosynthesis via salvage pathway; dTMP from thymine: step 1/2. Its function is as follows. The enzymes which catalyze the reversible phosphorolysis of pyrimidine nucleosides are involved in the degradation of these compounds and in their utilization as carbon and energy sources, or in the rescue of pyrimidine bases for nucleotide synthesis. In Shewanella sp. (strain ANA-3), this protein is Thymidine phosphorylase.